The primary structure comprises 385 residues: MNNLILVKYASEIFLKGLNKNKFERKLKENIRKKLKDIDHEFITDQNRWFIKSEDLDGVIERVKKVFGVKELCLVTQVTGDFNSIKEEGLKKIKESKAKSFKVETNRANKKFPMNSMEVSRAVGGYILSELGDEIEVDIHNPECKLYVEIRGNAYVFTDKDKIKAVGGLPYGMNGSTMVMLSGGIDSPVAAYLMARRGVETHCVYYHSHPYTSERAKDKVKELAKIVGRYTEKITLYVVPFTEIQMDIIEKCREDELTIIMRRFMMRVACELSERKKIQSITTGESIGQVASQTMEGLMVSNDVSDRPVFRPLIAMDKEDIMDIARDIDTYDTSILPYEDCCTIFVPKHPKTKPRVKDMIIAERKLDIEALVNKAIDEMETFIFE.

In terms of domain architecture, THUMP spans Asp57–Lys160. ATP-binding positions include Met180–Leu181, Tyr205–Tyr206, Arg262, Gly284, and Gln293.

This sequence belongs to the ThiI family.

It localises to the cytoplasm. It carries out the reaction [ThiI sulfur-carrier protein]-S-sulfanyl-L-cysteine + a uridine in tRNA + 2 reduced [2Fe-2S]-[ferredoxin] + ATP + H(+) = [ThiI sulfur-carrier protein]-L-cysteine + a 4-thiouridine in tRNA + 2 oxidized [2Fe-2S]-[ferredoxin] + AMP + diphosphate. The catalysed reaction is [ThiS sulfur-carrier protein]-C-terminal Gly-Gly-AMP + S-sulfanyl-L-cysteinyl-[cysteine desulfurase] + AH2 = [ThiS sulfur-carrier protein]-C-terminal-Gly-aminoethanethioate + L-cysteinyl-[cysteine desulfurase] + A + AMP + 2 H(+). It functions in the pathway cofactor biosynthesis; thiamine diphosphate biosynthesis. In terms of biological role, catalyzes the ATP-dependent transfer of a sulfur to tRNA to produce 4-thiouridine in position 8 of tRNAs, which functions as a near-UV photosensor. Also catalyzes the transfer of sulfur to the sulfur carrier protein ThiS, forming ThiS-thiocarboxylate. This is a step in the synthesis of thiazole, in the thiamine biosynthesis pathway. The sulfur is donated as persulfide by IscS. This chain is Probable tRNA sulfurtransferase, found in Clostridium perfringens (strain SM101 / Type A).